The sequence spans 145 residues: Large ribosomal subunit protein uL15 (145 aa).

The disordered stretch occupies residues 1-52; that stretch reads MRLNTLSPAAGSKRVKHRPGRGIGSGLGKTGGRGVKGQTSRSGGGKVRNGFE. 2 stretches are compositionally biased toward gly residues: residues 21 to 35 and 42 to 52; these read RGIG…GRGV and SGGGKVRNGFE.

It belongs to the universal ribosomal protein uL15 family. As to quaternary structure, part of the 50S ribosomal subunit.

Functionally, binds to the 23S rRNA. The chain is Large ribosomal subunit protein uL15 from Aeromonas hydrophila subsp. hydrophila (strain ATCC 7966 / DSM 30187 / BCRC 13018 / CCUG 14551 / JCM 1027 / KCTC 2358 / NCIMB 9240 / NCTC 8049).